The primary structure comprises 160 residues: 2-C-methyl-D-erythritol 2,4-cyclodiphosphate synthase (160 aa).

Residues D9 and H11 each coordinate a divalent metal cation. 4-CDP-2-C-methyl-D-erythritol 2-phosphate is bound by residues 9–11 (DVH) and 35–36 (HS). A divalent metal cation is bound at residue H43. 4-CDP-2-C-methyl-D-erythritol 2-phosphate contacts are provided by residues 57-59 (DIG), 62-66 (FPDTD), 101-107 (AQKPKMA), 133-136 (TTTE), F140, and R143.

This sequence belongs to the IspF family. As to quaternary structure, homotrimer. The cofactor is a divalent metal cation.

The enzyme catalyses 4-CDP-2-C-methyl-D-erythritol 2-phosphate = 2-C-methyl-D-erythritol 2,4-cyclic diphosphate + CMP. It functions in the pathway isoprenoid biosynthesis; isopentenyl diphosphate biosynthesis via DXP pathway; isopentenyl diphosphate from 1-deoxy-D-xylulose 5-phosphate: step 4/6. In terms of biological role, involved in the biosynthesis of isopentenyl diphosphate (IPP) and dimethylallyl diphosphate (DMAPP), two major building blocks of isoprenoid compounds. Catalyzes the conversion of 4-diphosphocytidyl-2-C-methyl-D-erythritol 2-phosphate (CDP-ME2P) to 2-C-methyl-D-erythritol 2,4-cyclodiphosphate (ME-CPP) with a corresponding release of cytidine 5-monophosphate (CMP). This Geobacillus thermodenitrificans (strain NG80-2) protein is 2-C-methyl-D-erythritol 2,4-cyclodiphosphate synthase.